Reading from the N-terminus, the 60-residue chain is Large ribosomal subunit protein bL32 (60 aa).

Residues 1-20 show a composition bias toward basic residues; it reads MACPKKKTSKSKRSMRRAAW. The tract at residues 1–22 is disordered; sequence MACPKKKTSKSKRSMRRAAWKR.

Belongs to the bacterial ribosomal protein bL32 family.

The sequence is that of Large ribosomal subunit protein bL32 from Thermosynechococcus vestitus (strain NIES-2133 / IAM M-273 / BP-1).